Here is a 554-residue protein sequence, read N- to C-terminus: CTP synthase (554 aa).

An amidoligase domain region spans residues 1–265; that stretch reads MTPLIFVTGG…DELVIDQFKL (265 aa). Ser13 is a CTP binding site. Residue Ser13 participates in UTP binding. Residues 14-19 and Asp71 contribute to the ATP site; that span reads SLGKGI. Asp71 and Glu139 together coordinate Mg(2+). Residues 146–148, 186–191, and Lys222 each bind CTP; these read DIE and KTKPTQ. UTP is bound by residues 186-191 and Lys222; that span reads KTKPTQ. Residues 292–545 enclose the Glutamine amidotransferase type-1 domain; the sequence is NIAVVGKYVD…VRAAREKKAG (254 aa). Gly353 provides a ligand contact to L-glutamine. The active-site Nucleophile; for glutamine hydrolysis is Cys380. L-glutamine-binding positions include 381-384, Glu404, and Arg471; that span reads YGMQ. Catalysis depends on residues His518 and Glu520.

It belongs to the CTP synthase family. In terms of assembly, homotetramer.

The catalysed reaction is UTP + L-glutamine + ATP + H2O = CTP + L-glutamate + ADP + phosphate + 2 H(+). It catalyses the reaction L-glutamine + H2O = L-glutamate + NH4(+). The enzyme catalyses UTP + NH4(+) + ATP = CTP + ADP + phosphate + 2 H(+). It functions in the pathway pyrimidine metabolism; CTP biosynthesis via de novo pathway; CTP from UDP: step 2/2. With respect to regulation, allosterically activated by GTP, when glutamine is the substrate; GTP has no effect on the reaction when ammonia is the substrate. The allosteric effector GTP functions by stabilizing the protein conformation that binds the tetrahedral intermediate(s) formed during glutamine hydrolysis. Inhibited by the product CTP, via allosteric rather than competitive inhibition. Catalyzes the ATP-dependent amination of UTP to CTP with either L-glutamine or ammonia as the source of nitrogen. Regulates intracellular CTP levels through interactions with the four ribonucleotide triphosphates. In Xanthomonas axonopodis pv. citri (strain 306), this protein is CTP synthase.